The sequence spans 273 residues: uncharacterized protein (273 aa).

An N-terminal signal peptide occupies residues 1 to 21; the sequence is MKILRWLFALVMLIATTEAMA.

This sequence to S.typhimurium YadU.

Its function is as follows. Part of the yfcOPQRSUV fimbrial operon. Could contribute to adhesion to various surfaces in specific environmental niches. Increases adhesion to eukaryotic T24 bladder epithelial cells in the absence of fim genes. This is an uncharacterized protein from Escherichia coli (strain K12).